The chain runs to 517 residues: Cytochrome P450 1A1 (517 aa).

The mitochondrial targeting signal stretch occupies residues 34 to 45 (WQPRVPKGLKSP). The O-linked (GlcNAc) serine glycan is linked to S72. Position 229 (F229) interacts with substrate. C462 is a heme binding site.

The protein belongs to the cytochrome P450 family. Interacts with cytosolic chaperones HSP70 and HSP90; this interaction is required for initial targeting to mitochondria. Interacts (via mitochondrial targeting signal) with TOMM40 (via N-terminus); this interaction is required for translocation across the mitochondrial outer membrane. The cofactor is heme.

Its subcellular location is the endoplasmic reticulum membrane. It is found in the mitochondrion inner membrane. It localises to the microsome membrane. The protein resides in the cytoplasm. The catalysed reaction is an organic molecule + reduced [NADPH--hemoprotein reductase] + O2 = an alcohol + oxidized [NADPH--hemoprotein reductase] + H2O + H(+). It carries out the reaction estrone + reduced [NADPH--hemoprotein reductase] + O2 = 2-hydroxyestrone + oxidized [NADPH--hemoprotein reductase] + H2O + H(+). The enzyme catalyses estrone + reduced [NADPH--hemoprotein reductase] + O2 = 4-hydroxyestrone + oxidized [NADPH--hemoprotein reductase] + H2O + H(+). It catalyses the reaction estrone + reduced [NADPH--hemoprotein reductase] + O2 = 6alpha-hydroxyestrone + oxidized [NADPH--hemoprotein reductase] + H2O + H(+). The catalysed reaction is estrone + reduced [NADPH--hemoprotein reductase] + O2 = 15alpha-hydroxyestrone + oxidized [NADPH--hemoprotein reductase] + H2O + H(+). It carries out the reaction estrone + reduced [NADPH--hemoprotein reductase] + O2 = 16alpha-hydroxyestrone + oxidized [NADPH--hemoprotein reductase] + H2O + H(+). The enzyme catalyses 17beta-estradiol + reduced [NADPH--hemoprotein reductase] + O2 = 2-hydroxy-17beta-estradiol + oxidized [NADPH--hemoprotein reductase] + H2O + H(+). It catalyses the reaction 17beta-estradiol + reduced [NADPH--hemoprotein reductase] + O2 = 4-hydroxy-17beta-estradiol + oxidized [NADPH--hemoprotein reductase] + H2O + H(+). The catalysed reaction is 17beta-estradiol + reduced [NADPH--hemoprotein reductase] + O2 = 6alpha-hydroxy-17beta-estradiol + oxidized [NADPH--hemoprotein reductase] + H2O + H(+). It carries out the reaction 17beta-estradiol + reduced [NADPH--hemoprotein reductase] + O2 = 7alpha-hydroxy-17beta-estradiol + oxidized [NADPH--hemoprotein reductase] + H2O + H(+). The enzyme catalyses 17beta-estradiol + reduced [NADPH--hemoprotein reductase] + O2 = 15alpha-hydroxy-17beta-estradiol + oxidized [NADPH--hemoprotein reductase] + H2O + H(+). It catalyses the reaction (5Z,8Z,11Z)-eicosatrienoate + reduced [NADPH--hemoprotein reductase] + O2 = 19-hydroxy-(5Z,8Z,11Z)-eicosatrienoate + oxidized [NADPH--hemoprotein reductase] + H2O + H(+). The catalysed reaction is (5Z,8Z,11Z,14Z)-eicosatetraenoate + reduced [NADPH--hemoprotein reductase] + O2 = 16-hydroxy-(5Z,8Z,11Z,14Z)-eicosatetraenoate + oxidized [NADPH--hemoprotein reductase] + H2O + H(+). It carries out the reaction (5Z,8Z,11Z,14Z)-eicosatetraenoate + reduced [NADPH--hemoprotein reductase] + O2 = 17-hydroxy-(5Z,8Z,11Z,14Z)-eicosatetraenoate + oxidized [NADPH--hemoprotein reductase] + H2O + H(+). The enzyme catalyses (5Z,8Z,11Z,14Z)-eicosatetraenoate + reduced [NADPH--hemoprotein reductase] + O2 = 18-hydroxy-(5Z,8Z,11Z,14Z)-eicosatetraenoate + oxidized [NADPH--hemoprotein reductase] + H2O + H(+). It catalyses the reaction (5Z,8Z,11Z,14Z)-eicosatetraenoate + reduced [NADPH--hemoprotein reductase] + O2 = 19-hydroxy-(5Z,8Z,11Z,14Z)-eicosatetraenoate + oxidized [NADPH--hemoprotein reductase] + H2O + H(+). The catalysed reaction is (5Z,8Z,11Z,14Z,17Z)-eicosapentaenoate + reduced [NADPH--hemoprotein reductase] + O2 = 19-hydroxy-(5Z,8Z,11Z,14Z,17Z)-eicosapentaenoate + oxidized [NADPH--hemoprotein reductase] + H2O + H(+). It carries out the reaction (5Z,8Z,11Z,14Z)-eicosatetraenoate + reduced [NADPH--hemoprotein reductase] + O2 = (8R,9S)-epoxy-(5Z,11Z,14Z)-eicosatrienoate + oxidized [NADPH--hemoprotein reductase] + H2O + H(+). The enzyme catalyses (5Z,8Z,11Z,14Z)-eicosatetraenoate + reduced [NADPH--hemoprotein reductase] + O2 = (11R,12S)-epoxy-(5Z,8Z,14Z)-eicosatrienoate + oxidized [NADPH--hemoprotein reductase] + H2O + H(+). It catalyses the reaction (5Z,8Z,11Z,14Z)-eicosatetraenoate + reduced [NADPH--hemoprotein reductase] + O2 = (14S,15R)-epoxy-(5Z,8Z,11Z)-eicosatrienoate + oxidized [NADPH--hemoprotein reductase] + H2O + H(+). The catalysed reaction is (5Z,8Z,11Z,14Z)-eicosatetraenoate + reduced [NADPH--hemoprotein reductase] + O2 = (14R,15S)-epoxy-(5Z,8Z,11Z)-eicosatrienoate + oxidized [NADPH--hemoprotein reductase] + H2O + H(+). It carries out the reaction (5Z,8Z,11Z,14Z,17Z)-eicosapentaenoate + reduced [NADPH--hemoprotein reductase] + O2 = (17R,18S)-epoxy-(5Z,8Z,11Z,14Z)-eicosatetraenoate + oxidized [NADPH--hemoprotein reductase] + H2O + H(+). The enzyme catalyses (4Z,7Z,10Z,13Z,16Z,19Z)-docosahexaenoate + reduced [NADPH--hemoprotein reductase] + O2 = (19S,20R)-epoxy-(4Z,7Z,10Z,13Z,16Z)-docosapentaenoate + oxidized [NADPH--hemoprotein reductase] + H2O + H(+). It catalyses the reaction (4Z,7Z,10Z,13Z,16Z,19Z)-docosahexaenoate + reduced [NADPH--hemoprotein reductase] + O2 = (19R,20S)-epoxy-(4Z,7Z,10Z,13Z,16Z)-docosapentaenoate + oxidized [NADPH--hemoprotein reductase] + H2O + H(+). The catalysed reaction is all-trans-retinol + reduced [NADPH--hemoprotein reductase] + O2 = all-trans-retinal + oxidized [NADPH--hemoprotein reductase] + 2 H2O + H(+). It carries out the reaction all-trans-retinal + reduced [NADPH--hemoprotein reductase] + O2 = all-trans-retinoate + oxidized [NADPH--hemoprotein reductase] + H2O + 2 H(+). The enzyme catalyses (13S)-hydroperoxy-(9Z,11E)-octadecadienoate = 13-oxo-(9Z,11E)-octadecadienoate + H2O. It catalyses the reaction (12S)-hydroperoxy-(5Z,8Z,10E,14Z)-eicosatetraenoate = 12-oxo-(5Z,8Z,10E,14Z)-eicosatetraenoate + H2O. The catalysed reaction is (15S)-hydroperoxy-(5Z,8Z,11Z,13E)-eicosatetraenoate = 15-oxo-(5Z,8Z,11Z,13E)-eicosatetraenoate + H2O. It carries out the reaction (5S)-hydroperoxy-(6E,8Z,11Z,14Z)-eicosatetraenoate = 5-oxo-(6E,8Z,11Z,14Z)-eicosatetraenoate + H2O. Its pathway is steroid hormone biosynthesis. The protein operates within lipid metabolism; fatty acid metabolism. It participates in cofactor metabolism; retinol metabolism. Its function is as follows. A cytochrome P450 monooxygenase involved in the metabolism of various endogenous substrates, including fatty acids, steroid hormones and vitamins. Mechanistically, uses molecular oxygen inserting one oxygen atom into a substrate, and reducing the second into a water molecule, with two electrons provided by NADPH via cytochrome P450 reductase (CPR; NADPH-ferrihemoprotein reductase). Catalyzes the hydroxylation of carbon-hydrogen bonds. Exhibits high catalytic activity for the formation of hydroxyestrogens from estrone (E1) and 17beta-estradiol (E2), namely 2-hydroxy E1 and E2, as well as D-ring hydroxylated E1 and E2 at the C15alpha and C16alpha positions. Displays different regioselectivities for polyunsaturated fatty acids (PUFA) hydroxylation. Catalyzes the epoxidation of double bonds of certain PUFA. Converts arachidonic acid toward epoxyeicosatrienoic acid (EET) regioisomers, 8,9-, 11,12-, and 14,15-EET, that function as lipid mediators in the vascular system. Displays an absolute stereoselectivity in the epoxidation of eicosapentaenoic acid (EPA) producing the 17(R),18(S) enantiomer. May play an important role in all-trans retinoic acid biosynthesis in extrahepatic tissues. Catalyzes two successive oxidative transformation of all-trans retinol to all-trans retinal and then to the active form all-trans retinoic acid. May also participate in eicosanoids metabolism by converting hydroperoxide species into oxo metabolites (lipoxygenase-like reaction, NADPH-independent). This is Cytochrome P450 1A1 (CYP1A1) from Felis catus (Cat).